The chain runs to 359 residues: MVPNYSTEETVKRIHVDCPVSGRHSYIYIMVPTVYSIIFIIGIFGNSLVVIVIYCYMKLKTVASIFLLNLALADLCFLITLPLWAAYTAMEYQWPFGNCLCKLASAGISFNLYASVFLLTCLSIDRYLAIVHPVKSRIRRTMFVARVTCIVIWLLAGVASLPVIIHRNIFFAENLNMTVCGFRYDNNNTTLRVGLGLSKNLLGFLIPFLIILTSYTLIWKTLKKAYQIQRNKTRNDDIFKMIVAIVFFFFFSWIPHQVFTFLDVLIQLHVITDCKITDIVDTAMPFTICIAYFNNCLNPFFYVFFGKNFKKYFLQLIKYIPPNVSTHPSLTTKMSSLSYRPPENIRLPTKKTAGSFDTE.

The Extracellular segment spans residues 1–25 (MVPNYSTEETVKRIHVDCPVSGRHS). N-linked (GlcNAc...) asparagine glycosylation occurs at Asn4. Asp17 contributes to the angiotensin II binding site. 2 cysteine pairs are disulfide-bonded: Cys18/Cys274 and Cys101/Cys180. Residues 26-55 (YIYIMVPTVYSIIFIIGIFGNSLVVIVIYC) form a helical membrane-spanning segment. The Cytoplasmic segment spans residues 56-61 (YMKLKT). The helical transmembrane segment at 62–89 (VASIFLLNLALADLCFLITLPLWAAYTA) threads the bilayer. Over 90–98 (MEYQWPFGN) the chain is Extracellular. The helical transmembrane segment at 99–125 (CLCKLASAGISFNLYASVFLLTCLSID) threads the bilayer. The Cytoplasmic segment spans residues 126-141 (RYLAIVHPVKSRIRRT). The chain crosses the membrane as a helical span at residues 142-165 (MFVARVTCIVIWLLAGVASLPVII). The Extracellular segment spans residues 166–190 (HRNIFFAENLNMTVCGFRYDNNNTT). Position 167 (Arg167) interacts with angiotensin II. Residue Asn176 is glycosylated (N-linked (GlcNAc...) asparagine). Phe182 and Tyr184 together coordinate angiotensin II. 2 N-linked (GlcNAc...) asparagine glycosylation sites follow: Asn187 and Asn188. Residues 191–216 (LRVGLGLSKNLLGFLIPFLIILTSYT) form a helical membrane-spanning segment. Lys199 contributes to the angiotensin II binding site. Residues 217 to 239 (LIWKTLKKAYQIQRNKTRNDDIF) are Cytoplasmic-facing. Residues 240–268 (KMIVAIVFFFFFSWIPHQVFTFLDVLIQL) traverse the membrane as a helical segment. Over 269-278 (HVITDCKITD) the chain is Extracellular. Residues 279–304 (IVDTAMPFTICIAYFNNCLNPFFYVF) form a helical membrane-spanning segment. Over 305–359 (FGKNFKKYFLQLIKYIPPNVSTHPSLTTKMSSLSYRPPENIRLPTKKTAGSFDTE) the chain is Cytoplasmic.

It belongs to the G-protein coupled receptor 1 family. In terms of processing, C-terminal Ser or Thr residues may be phosphorylated. Adrenal medulla.

Its subcellular location is the cell membrane. Receptor for angiotensin II, a vasoconstricting peptide, which acts as a key regulator of blood pressure and sodium retention by the kidney. The activated receptor in turn couples to G-alpha proteins G(q) (GNAQ, GNA11, GNA14 or GNA15) and thus activates phospholipase C and increases the cytosolic Ca(2+) concentrations, which in turn triggers cellular responses such as stimulation of protein kinase C. This chain is Type-1 angiotensin II receptor (AGTR1), found in Meleagris gallopavo (Wild turkey).